The chain runs to 747 residues: Phenylalanine ammonia-lyase 2 (747 aa).

Positions 1–20 (MTILSGTTAAPRVNGTTMNG) are enriched in polar residues. Residues 1–47 (MTILSGTTAAPRVNGTTMNGHSKPHTNGVHLNGHAPKATTESPWPQS) are disordered. Tyr-124 acts as the Proton donor/acceptor in catalysis. The segment at residues 229–231 (ASG) is a cross-link (5-imidazolinone (Ala-Gly)). Ser-230 carries the post-translational modification 2,3-didehydroalanine (Ser). The (E)-cinnamate site is built by Asn-290, Gln-380, Arg-386, Asn-416, Lys-487, Glu-515, and Asn-518.

This sequence belongs to the PAL/histidase family. In terms of assembly, homotetramer. Post-translationally, contains an active site 4-methylidene-imidazol-5-one (MIO), which is formed autocatalytically by cyclization and dehydration of residues Ala-Ser-Gly.

It is found in the cytoplasm. It catalyses the reaction L-phenylalanine = (E)-cinnamate + NH4(+). It functions in the pathway phenylpropanoid metabolism; trans-cinnamate biosynthesis; trans-cinnamate from L-phenylalanine: step 1/1. Functionally, catalyzes the non-oxidative deamination of L-phenylalanine to form trans-cinnamic acid and a free ammonium ion. Facilitates the commitment step in phenylpropanoid pathways that produce secondary metabolites such as lignins, coumarins and flavonoids. This Pleurotus ostreatus (Oyster mushroom) protein is Phenylalanine ammonia-lyase 2.